The following is a 479-amino-acid chain: Protein phosphatase 1B (479 aa).

Positions 1-14 (MGAFLDKPKTEKHN) are enriched in basic and acidic residues. Positions 1 to 20 (MGAFLDKPKTEKHNAHGAGN) are disordered. Gly2 is lipidated: N-myristoyl glycine. A Glycyl lysine isopeptide (Lys-Gly) (interchain with G-Cter in ISG15) cross-link involves residue Lys12. In terms of domain architecture, PPM-type phosphatase spans 23–295 (RYGLSSMQGW…DNMSIVLVCF (273 aa)). Mn(2+) contacts are provided by Asp60 and Gly61. A Glycyl lysine isopeptide (Lys-Gly) (interchain with G-Cter in ISG15) cross-link involves residue Lys142. Mn(2+)-binding residues include Asp243 and Asp286. The residue at position 386 (Ser386) is a Phosphoserine. The interval 423–479 (VEGEESPAEPAATATSSNSDAGNPVTMQESHTESESGLAELDSSNEDAGTKMSGEKI) is disordered. A compositionally biased stretch (low complexity) spans 430–439 (AEPAATATSS). Polar residues predominate over residues 440–451 (NSDAGNPVTMQE).

Belongs to the PP2C family. In terms of assembly, monomer. Interacts with PAK6. Interacts with the phosphorylated form of IKBKB/IKKB. It depends on Mg(2+) as a cofactor. Requires Mn(2+) as cofactor. Post-translationally, isgylation negatively regulates its activity. In terms of processing, N-myristoylation is essential for the recognition of its substrates for dephosphorylation. In terms of tissue distribution, highly expressed in heart and skeletal muscle.

It localises to the cytoplasm. It is found in the cytosol. The protein localises to the membrane. The enzyme catalyses O-phospho-L-seryl-[protein] + H2O = L-seryl-[protein] + phosphate. It catalyses the reaction O-phospho-L-threonyl-[protein] + H2O = L-threonyl-[protein] + phosphate. Its function is as follows. Enzyme with a broad specificity. Dephosphorylates CDK2 and CDK6 in vitro. Dephosphorylates PRKAA1 and PRKAA2. Inhibits TBK1-mediated antiviral signaling by dephosphorylating it at 'Ser-172'. Plays an important role in the termination of TNF-alpha-mediated NF-kappa-B activation through dephosphorylating and inactivating IKBKB/IKKB. The polypeptide is Protein phosphatase 1B (PPM1B) (Homo sapiens (Human)).